A 148-amino-acid chain; its full sequence is Deoxyuridine 5'-triphosphate nucleotidohydrolase (148 aa).

Residues 67–69 (RSG), Asn80, 84–86 (LID), and Met94 each bind substrate.

This sequence belongs to the dUTPase family. The cofactor is Mg(2+).

The catalysed reaction is dUTP + H2O = dUMP + diphosphate + H(+). It participates in pyrimidine metabolism; dUMP biosynthesis; dUMP from dCTP (dUTP route): step 2/2. In terms of biological role, this enzyme is involved in nucleotide metabolism: it produces dUMP, the immediate precursor of thymidine nucleotides and it decreases the intracellular concentration of dUTP so that uracil cannot be incorporated into DNA. In Burkholderia mallei (strain NCTC 10247), this protein is Deoxyuridine 5'-triphosphate nucleotidohydrolase.